Here is a 230-residue protein sequence, read N- to C-terminus: Thiamine-triphosphatase (230 aa).

The residue at position 2 (Ala2) is an N-acetylalanine. One can recognise a CYTH domain in the interval 5 to 201; that stretch reads LIEVERKFLP…AKLIVYLQRF (197 aa). 2 residues coordinate Mg(2+): Glu7 and Glu9. Substrate-binding residues include Lys11, Arg55, Arg57, Lys65, and Arg125. Mg(2+) contacts are provided by Asp145, Glu157, and Glu159. Glu157 provides a ligand contact to substrate. Lys193 contributes to the substrate binding site.

Belongs to the ThTPase family. As to quaternary structure, monomer. Mg(2+) is required as a cofactor. In terms of tissue distribution, widely expressed but at a low level.

The protein localises to the cytoplasm. It catalyses the reaction thiamine triphosphate + H2O = thiamine diphosphate + phosphate + H(+). Its function is as follows. Hydrolase highly specific for thiamine triphosphate (ThTP). In Homo sapiens (Human), this protein is Thiamine-triphosphatase (THTPA).